The sequence spans 326 residues: MPPYISAFQAAYIGIEVLIALVSVPGNVLVIWAVKVNQALRDATFCFIVSLAVADVAVGALVIPLAILINIGPQTYFHTCLMVACPVLILTQSSILALLAIAVDRYLRVKIPLRYKTVVTQRRAAVAIAGCWILSLVVGLTPMFGWNNLSEVEQAWIANGSVGEPVIKCEFEKVISMEYMVYFNFFVWVLPPLLLMVLIYLEVFYLIRKQLNKKVSASSGDPQKYYGKELKIAKSLALILFLFALSWLPLHILNCITLFCPTCQKPSILIYIAIFLTHGNSAMNPIVYAFRIHKFRVTFLKIWNDHFRCQPKPPIEEDIPEEKADD.

The Extracellular segment spans residues 1 to 10 (MPPYISAFQA). The chain crosses the membrane as a helical span at residues 11-33 (AYIGIEVLIALVSVPGNVLVIWA). The Cytoplasmic portion of the chain corresponds to 34–46 (VKVNQALRDATFC). A helical transmembrane segment spans residues 47 to 69 (FIVSLAVADVAVGALVIPLAILI). Topologically, residues 70–80 (NIGPQTYFHTC) are extracellular. An intrachain disulfide couples cysteine 80 to cysteine 169. A helical transmembrane segment spans residues 81-102 (LMVACPVLILTQSSILALLAIA). Topologically, residues 103–123 (VDRYLRVKIPLRYKTVVTQRR) are cytoplasmic. Residues 124–146 (AAVAIAGCWILSLVVGLTPMFGW) form a helical membrane-spanning segment. The Extracellular segment spans residues 147-176 (NNLSEVEQAWIANGSVGEPVIKCEFEKVIS). Asparagine 148 and asparagine 159 each carry an N-linked (GlcNAc...) asparagine glycan. A helical transmembrane segment spans residues 177–201 (MEYMVYFNFFVWVLPPLLLMVLIYL). Over 202–235 (EVFYLIRKQLNKKVSASSGDPQKYYGKELKIAKS) the chain is Cytoplasmic. The helical transmembrane segment at 236–259 (LALILFLFALSWLPLHILNCITLF) threads the bilayer. The Extracellular portion of the chain corresponds to 260–267 (CPTCQKPS). A helical transmembrane segment spans residues 268–292 (ILIYIAIFLTHGNSAMNPIVYAFRI). Residues 293-326 (HKFRVTFLKIWNDHFRCQPKPPIEEDIPEEKADD) lie on the Cytoplasmic side of the membrane. Cysteine 309 carries the S-palmitoyl cysteine lipid modification.

It belongs to the G-protein coupled receptor 1 family.

It is found in the cell membrane. Its function is as follows. Receptor for adenosine. The activity of this receptor is mediated by G proteins which inhibit adenylyl cyclase. This Mus musculus (Mouse) protein is Adenosine receptor A1 (Adora1).